The following is a 308-amino-acid chain: Serpentine receptor class V-1 (308 aa).

The next 7 membrane-spanning stretches (helical) occupy residues 15–35, 46–68, 88–108, 135–155, 184–204, 222–242, and 256–276; these read VSTA…YILF, PFFR…STFF, VVPI…IIFI, LLLI…STDF, AMVD…AIFI, LALS…CSLL, and TMWF…LLAL.

It belongs to the nematode receptor-like protein srv family.

It is found in the membrane. This Caenorhabditis elegans protein is Serpentine receptor class V-1 (srv-1).